The sequence spans 258 residues: tRNA pseudouridine synthase A (258 aa).

The active-site Nucleophile is Asp55. Substrate is bound at residue Tyr113.

This sequence belongs to the tRNA pseudouridine synthase TruA family. Homodimer.

It catalyses the reaction uridine(38/39/40) in tRNA = pseudouridine(38/39/40) in tRNA. Functionally, formation of pseudouridine at positions 38, 39 and 40 in the anticodon stem and loop of transfer RNAs. The sequence is that of tRNA pseudouridine synthase A from Limosilactobacillus fermentum (strain NBRC 3956 / LMG 18251) (Lactobacillus fermentum).